Reading from the N-terminus, the 330-residue chain is Protein C10 (330 aa).

Belongs to the poxviridae C4/C10 protein family.

The sequence is that of Protein C10 from Homo sapiens (Human).